The primary structure comprises 369 residues: Anhydro-N-acetylmuramic acid kinase (369 aa).

12 to 19 (GTSLDGVD) is a binding site for ATP.

It belongs to the anhydro-N-acetylmuramic acid kinase family.

The catalysed reaction is 1,6-anhydro-N-acetyl-beta-muramate + ATP + H2O = N-acetyl-D-muramate 6-phosphate + ADP + H(+). Its pathway is amino-sugar metabolism; 1,6-anhydro-N-acetylmuramate degradation. The protein operates within cell wall biogenesis; peptidoglycan recycling. Functionally, catalyzes the specific phosphorylation of 1,6-anhydro-N-acetylmuramic acid (anhMurNAc) with the simultaneous cleavage of the 1,6-anhydro ring, generating MurNAc-6-P. Is required for the utilization of anhMurNAc either imported from the medium or derived from its own cell wall murein, and thus plays a role in cell wall recycling. This Escherichia coli (strain SE11) protein is Anhydro-N-acetylmuramic acid kinase.